The primary structure comprises 255 residues: Indole-3-glycerol phosphate synthase (255 aa).

This sequence belongs to the TrpC family.

It carries out the reaction 1-(2-carboxyphenylamino)-1-deoxy-D-ribulose 5-phosphate + H(+) = (1S,2R)-1-C-(indol-3-yl)glycerol 3-phosphate + CO2 + H2O. Its pathway is amino-acid biosynthesis; L-tryptophan biosynthesis; L-tryptophan from chorismate: step 4/5. The polypeptide is Indole-3-glycerol phosphate synthase (Streptococcus mutans serotype c (strain ATCC 700610 / UA159)).